We begin with the raw amino-acid sequence, 957 residues long: Exoribonuclease II, mitochondrial (957 aa).

The transit peptide at 1 to 54 (MNYRQLFLLQNVNLESNYLLKRVCLSLKLSPCKLTRKFHHACPSSSKVLKYFRI) directs the protein to the mitochondrion. Positions 503–843 (RVDLRHLKAF…FTHHQIQSVL (341 aa)) constitute an RNB domain.

This sequence belongs to the RNR ribonuclease family.

It is found in the mitochondrion. It catalyses the reaction Exonucleolytic cleavage in the 3'- to 5'-direction to yield nucleoside 5'-phosphates.. In terms of biological role, required for intron-independent turnover and processing of mitochondrial RNA. Participates in 3'-mtRNA processing where it hydrolyzes single-stranded RNA or partially double-stranded RNA with 3'-single-stranded tails. The chain is Exoribonuclease II, mitochondrial (rpm1) from Schizosaccharomyces pombe (strain 972 / ATCC 24843) (Fission yeast).